Consider the following 485-residue polypeptide: Hydrogenase transcriptional regulatory protein HoxA (485 aa).

The Response regulatory domain maps to 6–120; that stretch reads TILVVDDEVR…QLVETVKEAV (115 aa). Aspartate 54 is modified (4-aspartylphosphate). In terms of domain architecture, Sigma-54 factor interaction spans 166 to 392; sequence STESPMHAVI…ELQNEIQRMA (227 aa). ATP contacts are provided by residues 192–199 and 264–273; these read GESGTGKE and EIGETSPAFQ. A disordered region spans residues 404–426; the sequence is PLLGRRNGKRSAPLPAHGRLNGS. A DNA-binding region (H-T-H motif) is located at residues 451–470; sequence NISRVASELGLSRVGLRNKL.

The protein resides in the cytoplasm. In terms of biological role, probable member of the two-component regulatory system involved in the regulation of the hydrogenase activity. HoxA is probably phosphorylated by a sensory component (which could be HoxX) and then acts in conjunction with sigma-54 as a transcriptional activator. In Bradyrhizobium diazoefficiens (strain JCM 10833 / BCRC 13528 / IAM 13628 / NBRC 14792 / USDA 110), this protein is Hydrogenase transcriptional regulatory protein HoxA (hoxA).